Here is a 438-residue protein sequence, read N- to C-terminus: UDP-N-acetylglucosamine 1-carboxyvinyltransferase 1 (438 aa).

22–23 (KN) contributes to the phosphoenolpyruvate binding site. R95 is a binding site for UDP-N-acetyl-alpha-D-glucosamine. Residue C119 is the Proton donor of the active site. The residue at position 119 (C119) is a 2-(S-cysteinyl)pyruvic acid O-phosphothioketal. UDP-N-acetyl-alpha-D-glucosamine contacts are provided by residues 124 to 128 (RPIDL), D307, and V329.

The protein belongs to the EPSP synthase family. MurA subfamily.

Its subcellular location is the cytoplasm. The catalysed reaction is phosphoenolpyruvate + UDP-N-acetyl-alpha-D-glucosamine = UDP-N-acetyl-3-O-(1-carboxyvinyl)-alpha-D-glucosamine + phosphate. The protein operates within cell wall biogenesis; peptidoglycan biosynthesis. Cell wall formation. Adds enolpyruvyl to UDP-N-acetylglucosamine. The polypeptide is UDP-N-acetylglucosamine 1-carboxyvinyltransferase 1 (Lactiplantibacillus plantarum (strain ATCC BAA-793 / NCIMB 8826 / WCFS1) (Lactobacillus plantarum)).